Reading from the N-terminus, the 332-residue chain is tRNA uridine(34) hydroxylase (332 aa).

The Rhodanese domain occupies 127-221 (SDPETVLIDT…YLEEVPKEKS (95 aa)). Cys181 (cysteine persulfide intermediate) is an active-site residue. The interval 308–332 (AKKLAQLNKQKKQQAKEAARKKAQQ) is disordered. Positions 321 to 332 (QAKEAARKKAQQ) are enriched in basic and acidic residues.

It belongs to the TrhO family.

It carries out the reaction uridine(34) in tRNA + AH2 + O2 = 5-hydroxyuridine(34) in tRNA + A + H2O. Catalyzes oxygen-dependent 5-hydroxyuridine (ho5U) modification at position 34 in tRNAs. The chain is tRNA uridine(34) hydroxylase from Francisella tularensis subsp. tularensis (strain FSC 198).